The following is a 142-amino-acid chain: Large ribosomal subunit protein uL11 (142 aa).

It belongs to the universal ribosomal protein uL11 family. Part of the ribosomal stalk of the 50S ribosomal subunit. Interacts with L10 and the large rRNA to form the base of the stalk. L10 forms an elongated spine to which L12 dimers bind in a sequential fashion forming a multimeric L10(L12)X complex. Post-translationally, one or more lysine residues are methylated.

Its function is as follows. Forms part of the ribosomal stalk which helps the ribosome interact with GTP-bound translation factors. The polypeptide is Large ribosomal subunit protein uL11 (Acidithiobacillus ferrooxidans (strain ATCC 23270 / DSM 14882 / CIP 104768 / NCIMB 8455) (Ferrobacillus ferrooxidans (strain ATCC 23270))).